The sequence spans 1088 residues: ATP-dependent helicase/deoxyribonuclease subunit B (1088 aa).

It belongs to the helicase family. AddB/RexB type 2 subfamily. As to quaternary structure, heterodimer of AddA and RexB. The cofactor is Mg(2+).

Functionally, the heterodimer acts as both an ATP-dependent DNA helicase and an ATP-dependent, dual-direction single-stranded exonuclease. Recognizes the chi site generating a DNA molecule suitable for the initiation of homologous recombination. This subunit has 5' -&gt; 3' nuclease activity but not helicase activity. The polypeptide is ATP-dependent helicase/deoxyribonuclease subunit B (Streptococcus suis (strain 98HAH33)).